Here is a 471-residue protein sequence, read N- to C-terminus: 3-isopropylmalate dehydratase large subunit (471 aa).

Positions 347, 407, and 410 each coordinate [4Fe-4S] cluster.

Belongs to the aconitase/IPM isomerase family. LeuC type 1 subfamily. Heterodimer of LeuC and LeuD. The cofactor is [4Fe-4S] cluster.

The enzyme catalyses (2R,3S)-3-isopropylmalate = (2S)-2-isopropylmalate. It functions in the pathway amino-acid biosynthesis; L-leucine biosynthesis; L-leucine from 3-methyl-2-oxobutanoate: step 2/4. Its function is as follows. Catalyzes the isomerization between 2-isopropylmalate and 3-isopropylmalate, via the formation of 2-isopropylmaleate. The polypeptide is 3-isopropylmalate dehydratase large subunit (Prochlorococcus marinus (strain MIT 9211)).